The primary structure comprises 470 residues: Aldehyde dehydrogenase family 3 comG (470 aa).

196-201 lines the NAD(+) pocket; that stretch reads GSVKVG. Catalysis depends on residues glutamate 218 and cysteine 252.

The protein belongs to the aldehyde dehydrogenase family.

Its subcellular location is the cytoplasm. It carries out the reaction an aldehyde + NADP(+) + H2O = a carboxylate + NADPH + 2 H(+). The catalysed reaction is an aldehyde + NAD(+) + H2O = a carboxylate + NADH + 2 H(+). This is Aldehyde dehydrogenase family 3 comG (comG) from Dictyostelium discoideum (Social amoeba).